An 836-amino-acid polypeptide reads, in one-letter code: Protein-glutamine gamma-glutamyltransferase K (836 aa).

Over residues 1–33 (MDGPRSDMGRSDVSRSDMSRSDMGRSDMGRSDV) the composition is skewed to basic and acidic residues. Disordered regions lie at residues 1-68 (MDGP…SRGG) and 89-125 (DDWG…DGTI). Residue threonine 46 is modified to Phosphothreonine. Residues serine 48, serine 98, and serine 112 each carry the phosphoserine modification. Residues 89 to 112 (DDWGREPSDSRDRGSSSRGGRPDS) are compositionally biased toward basic and acidic residues. Residues cysteine 397, histidine 456, and aspartate 479 contribute to the active site. Asparagine 519, aspartate 521, glutamate 568, and glutamate 573 together coordinate Ca(2+). A Phosphoserine modification is found at serine 824.

It belongs to the transglutaminase superfamily. Transglutaminase family. Interacts with PLAAT4. It depends on Ca(2+) as a cofactor. Palmitoylated. Post-translationally, the membrane anchorage region possesses a cluster of five cysteines within which fatty acid(s) may become thioester-linked. It is subject to phorbol ester-stimulated phosphorylation and is hypersensitive to proteolysis, which releases the enzyme in a soluble form. In terms of processing, tyrosine-phosphorylated.

Its subcellular location is the membrane. It catalyses the reaction L-glutaminyl-[protein] + L-lysyl-[protein] = [protein]-L-lysyl-N(6)-5-L-glutamyl-[protein] + NH4(+). Its activity is regulated as follows. Inhibited by retinoic acid, but phorbol ester treatment activates it. Its function is as follows. Catalyzes the cross-linking of proteins and the conjugation of polyamines to proteins. Responsible for cross-linking epidermal proteins during formation of the stratum corneum. Involved in cell proliferation. In Oryctolagus cuniculus (Rabbit), this protein is Protein-glutamine gamma-glutamyltransferase K (TGM1).